The following is a 544-amino-acid chain: Probable protein kinase UbiB (544 aa).

The Protein kinase domain maps to 123–501 (DFDIKPLASA…KRQQAKGQFL (379 aa)). Residues 129–137 (LASASIAQV) and Lys152 each bind ATP. Asp287 serves as the catalytic Proton acceptor. The helical transmembrane segment at 515-537 (LLTSNITVLASISAATGAAFWLF) threads the bilayer.

It belongs to the ABC1 family. UbiB subfamily.

The protein localises to the cell inner membrane. It functions in the pathway cofactor biosynthesis; ubiquinone biosynthesis [regulation]. Functionally, is probably a protein kinase regulator of UbiI activity which is involved in aerobic coenzyme Q (ubiquinone) biosynthesis. This is Probable protein kinase UbiB from Aliivibrio fischeri (strain MJ11) (Vibrio fischeri).